Here is a 554-residue protein sequence, read N- to C-terminus: MKLFILLIVIVFLISNSYSLSSSDSSSDSGSDVQYYSLTSQFQVVQGKQIPGSIAWGYFKDEMNKDGWGKLSIETVSTVSDNIAFKAAGYLEGYLTWEYIYKFSGNYFNSFFNTSNIKEIPTETLTFVSDNWEYMMERVNSSSTTDPYWIQIRNAMSQQIGLYEGYNAAAGEDYQKTFIEIYMINLYGDMGDIVTLTTTPNNEFIPMDRKEVEQLMATTGHCTSIIKLTNNCSDLMSAHTSWADFSVMIRIYKRINIPVASTPYGSETLFSSYPGLLVSIDDFYQIRPSKLHLTETLNTILNQTLYQQINAQSFMYWVRNLVANRLANNGFQWVSIFVENNSGTNNIQFVVLDYKLFTPYSTELQSDLLWIVEQYPGGYQAADVTLTLWEQGYWPSYNRPYFEEVFDILGYPYYVEKFGDLFTYEYNPRANIFRRDHSKLETLQDMMNIIDYNQYKTDPFSMGYPGNSINARFDIKGGSLPSGNPIYSWFYHGTHGGIDGKAINYDMVNSFTAVARNGPTVTSDCPPFNWNDWSLISHQYMPQIYNFTWISINI.

Positions 1–19 (MKLFILLIVIVFLISNSYS) are cleaved as a signal peptide. N-linked (GlcNAc...) asparagine glycosylation is found at Asn113, Asn140, Asn231, Asn302, Asn340, and Asn546.

The protein belongs to the phospholipase B-like family.

Its subcellular location is the secreted. Functionally, probable phospholipase. The chain is Phospholipase B-like protein E (plbE) from Dictyostelium discoideum (Social amoeba).